Consider the following 413-residue polypeptide: Peptidase T (413 aa).

His84 is a Zn(2+) binding site. Asp86 is an active-site residue. Asp147 contacts Zn(2+). The active-site Proton acceptor is Glu181. 3 residues coordinate Zn(2+): Glu182, Asp204, and His386.

It belongs to the peptidase M20B family. Requires Zn(2+) as cofactor.

It localises to the cytoplasm. It carries out the reaction Release of the N-terminal residue from a tripeptide.. Cleaves the N-terminal amino acid of tripeptides. This is Peptidase T from Ligilactobacillus salivarius (strain UCC118) (Lactobacillus salivarius).